The following is a 280-amino-acid chain: Urease accessory protein UreD 1 (280 aa).

The protein belongs to the UreD family. In terms of assembly, ureD, UreF and UreG form a complex that acts as a GTP-hydrolysis-dependent molecular chaperone, activating the urease apoprotein by helping to assemble the nickel containing metallocenter of UreC. The UreE protein probably delivers the nickel.

Its subcellular location is the cytoplasm. Functionally, required for maturation of urease via the functional incorporation of the urease nickel metallocenter. The chain is Urease accessory protein UreD 1 from Brucella canis (strain ATCC 23365 / NCTC 10854 / RM-666).